We begin with the raw amino-acid sequence, 101 residues long: Small ribosomal subunit protein bS18c (101 aa).

This sequence belongs to the bacterial ribosomal protein bS18 family. Part of the 30S ribosomal subunit.

It is found in the plastid. It localises to the chloroplast. This is Small ribosomal subunit protein bS18c from Aethionema grandiflorum (Persian stone-cress).